The chain runs to 101 residues: Small ribosomal subunit protein bS21 (101 aa).

The span at 36-52 (YEKPSEKKAREKAEAVR) shows a compositional bias: basic and acidic residues. The disordered stretch occupies residues 36–101 (YEKPSEKKAR…GPGAGPRGPR (66 aa)). The segment covering 53-62 (RARKLARKKL) has biased composition (basic residues). Positions 83–101 (PGAGGPGAGGPGAGPRGPR) are enriched in gly residues.

The protein belongs to the bacterial ribosomal protein bS21 family.

The polypeptide is Small ribosomal subunit protein bS21 (Rhodopseudomonas palustris (strain HaA2)).